The primary structure comprises 269 residues: MDKKEKRPTVLFFDSGVGGFSVYREAKKLLPNWHYLYCFDNAGFPYSEREEESIIHRTLAACQLINQRYPLDAIVIACNTASTVVLPPLRAAFEIPIIGTVPAIKPASEITKTKHIGLLATKGTVKRHYIDELIDKFAQDCIVERLGTTKLVEIAEQKIRGHSVDLISLKDELSSWAGMADLDTLVLGCTHFPLIKDEIQLCLPQVKYFMDPSAAIAKRIKYLLDDKNLQVQNEKYNQMFCTAHFPEESQFKKALHLWGFESLEVIKID.

Residues 14–15 and 46–47 each bind substrate; these read DS and YS. Cys-78 serves as the catalytic Proton donor/acceptor. 79-80 is a binding site for substrate; it reads NT. Cys-189 (proton donor/acceptor) is an active-site residue. 190–191 provides a ligand contact to substrate; sequence TH.

This sequence belongs to the aspartate/glutamate racemases family.

It catalyses the reaction L-glutamate = D-glutamate. It participates in cell wall biogenesis; peptidoglycan biosynthesis. In terms of biological role, provides the (R)-glutamate required for cell wall biosynthesis. The protein is Glutamate racemase of Haemophilus influenzae (strain 86-028NP).